We begin with the raw amino-acid sequence, 384 residues long: 4-hydroxy-3-methylbut-2-en-1-yl diphosphate synthase (flavodoxin) 1 (384 aa).

4 residues coordinate [4Fe-4S] cluster: Cys-281, Cys-284, Cys-316, and Glu-323.

This sequence belongs to the IspG family. [4Fe-4S] cluster serves as cofactor.

The enzyme catalyses (2E)-4-hydroxy-3-methylbut-2-enyl diphosphate + oxidized [flavodoxin] + H2O + 2 H(+) = 2-C-methyl-D-erythritol 2,4-cyclic diphosphate + reduced [flavodoxin]. The protein operates within isoprenoid biosynthesis; isopentenyl diphosphate biosynthesis via DXP pathway; isopentenyl diphosphate from 1-deoxy-D-xylulose 5-phosphate: step 5/6. In terms of biological role, converts 2C-methyl-D-erythritol 2,4-cyclodiphosphate (ME-2,4cPP) into 1-hydroxy-2-methyl-2-(E)-butenyl 4-diphosphate. The polypeptide is 4-hydroxy-3-methylbut-2-en-1-yl diphosphate synthase (flavodoxin) 1 (Streptomyces coelicolor (strain ATCC BAA-471 / A3(2) / M145)).